The primary structure comprises 1223 residues: Rho family-interacting cell polarization regulator 1 (1223 aa).

The residue at position 22 (Ser-22) is a Phosphoserine. The stretch at 89-114 (LTAYLEVHQQEQEKLQGQIRESKRNS) forms a coiled coil. Phosphoserine is present on residues Ser-349 and Ser-351. Phosphothreonine is present on Thr-355. A disordered region spans residues 375–411 (NGTAWSLSSESSDDSSSPQLSGTARHSPAPRPLVQQP). The segment covering 380–395 (SLSSESSDDSSSPQLS) has biased composition (low complexity). Residues Ser-456 and Ser-459 each carry the phosphoserine modification. Disordered stretches follow at residues 475 to 769 (ESLA…APQH) and 856 to 889 (FLNE…SPSA). 2 stretches are compositionally biased toward low complexity: residues 505–523 (GHSA…PTST) and 546–564 (PGPT…TTTH). Polar residues predominate over residues 565–592 (SAPSPLTHTTTGSTHKPIISTLTTTGPT). 2 stretches are compositionally biased toward low complexity: residues 601–650 (TTTS…PTPS) and 659–675 (TSPT…TTSP). Over residues 680-695 (VSPSTSLELATLSSPS) the composition is skewed to polar residues. Residues 858–867 (NEDEDEDNDV) are compositionally biased toward acidic residues. Residues Ser-874 and Ser-875 each carry the phosphoserine modification.

This sequence belongs to the RIPOR family. Interacts (via N-terminus) with RHOA (GTP-bound form); this interaction links active RHOA to STK24 and STK26 kinases. Interacts with RHOB. Interacts with RHOC. Interacts (via C-terminus) with PDCD10; this interaction occurs in a Rho-independent manner. Interacts (via C-terminus) with STK24; this interaction occurs in a PDCD10-dependent and Rho-independent manner. Interacts (via C-terminus) with STK26; this interaction occurs in a PDCD10-dependent and Rho-independent manner. Interacts (via N-terminus) with 14-3-3 proteins; these interactions occur in a Rho-dependent manner.

The protein resides in the cytoplasm. The protein localises to the golgi apparatus. Functionally, downstream effector protein for Rho-type small GTPases that plays a role in cell polarity and directional migration. Acts as an adapter protein, linking active Rho proteins to STK24 and STK26 kinases, and hence positively regulates Golgi reorientation in polarized cell migration upon Rho activation. Involved in the subcellular relocation of STK26 from the Golgi to cytoplasm punctae in a Rho- and PDCD10-dependent manner upon serum stimulation. This Homo sapiens (Human) protein is Rho family-interacting cell polarization regulator 1 (RIPOR1).